Here is a 357-residue protein sequence, read N- to C-terminus: UDP-N-acetylglucosamine--N-acetylmuramyl-(pentapeptide) pyrophosphoryl-undecaprenol N-acetylglucosamine transferase (357 aa).

UDP-N-acetyl-alpha-D-glucosamine contacts are provided by residues 13–15, R166, S197, and Q292; that span reads SAG.

The protein belongs to the glycosyltransferase 28 family. MurG subfamily.

It is found in the cell membrane. It carries out the reaction di-trans,octa-cis-undecaprenyl diphospho-N-acetyl-alpha-D-muramoyl-L-alanyl-D-glutamyl-meso-2,6-diaminopimeloyl-D-alanyl-D-alanine + UDP-N-acetyl-alpha-D-glucosamine = di-trans,octa-cis-undecaprenyl diphospho-[N-acetyl-alpha-D-glucosaminyl-(1-&gt;4)]-N-acetyl-alpha-D-muramoyl-L-alanyl-D-glutamyl-meso-2,6-diaminopimeloyl-D-alanyl-D-alanine + UDP + H(+). It functions in the pathway cell wall biogenesis; peptidoglycan biosynthesis. Cell wall formation. Catalyzes the transfer of a GlcNAc subunit on undecaprenyl-pyrophosphoryl-MurNAc-pentapeptide (lipid intermediate I) to form undecaprenyl-pyrophosphoryl-MurNAc-(pentapeptide)GlcNAc (lipid intermediate II). The chain is UDP-N-acetylglucosamine--N-acetylmuramyl-(pentapeptide) pyrophosphoryl-undecaprenol N-acetylglucosamine transferase from Clostridium novyi (strain NT).